We begin with the raw amino-acid sequence, 512 residues long: Metal transporter Nramp4 (512 aa).

The next 12 helical transmembrane spans lie at 52 to 72, 80 to 100, 129 to 149, 161 to 181, 189 to 209, 235 to 255, 277 to 297, 323 to 343, 371 to 391, 402 to 422, 440 to 460, and 468 to 488; these read LWLFTGPGFLMSIAFLDPGNL, AIAGYSLIWLLMWATAIGLLI, MVLWIMAEIALIGADIQEVIG, LVPLWAGVVITALDCFIFLFL, LEAVFAILIATMALAFAWMFG, AVGIVGCIIMPHNVFLHSALV, IESTGALAVSFIINVFVTTVF, YGGGFFPILYIWAIGVLAAGQ, ALITRSCAIIPTMIVALVFDS, WLNVLQSVQIPFAVIPLLCLV, ISWIVAALVIAINGYLMVDFF, and ILLVPVIIFAIAYVVFVLYLI.

The protein belongs to the NRAMP (TC 2.A.55) family. As to expression, expressed in vascular tissues.

The protein localises to the vacuole membrane. In terms of biological role, vacuolar metal transporter involved in intracellular metal homeostasis. Can transport iron (Fe), manganese (Mn) and cadmium (Cd). Regulates metal accumulation under Fe starvation. Acts redundantly with NRAMP3 to mobilize vacuolar Fe and provide sufficient Fe during seed germination. In association with NRAMP3, required for optimal growth and photosynthesis under Mn deficiency. Exports Mn from vacuoles in leaf mesophyll cells, making Mn available for functional photosystem II in chloroplasts. This chain is Metal transporter Nramp4 (NRAMP4), found in Arabidopsis thaliana (Mouse-ear cress).